We begin with the raw amino-acid sequence, 360 residues long: Ribosomal RNA large subunit methyltransferase M (360 aa).

Residues Ser187, 220 to 223 (CPGG), Asp239, Asp259, and Asp276 contribute to the S-adenosyl-L-methionine site. Lys305 acts as the Proton acceptor in catalysis.

This sequence belongs to the class I-like SAM-binding methyltransferase superfamily. RNA methyltransferase RlmE family. RlmM subfamily. As to quaternary structure, monomer.

It is found in the cytoplasm. It catalyses the reaction cytidine(2498) in 23S rRNA + S-adenosyl-L-methionine = 2'-O-methylcytidine(2498) in 23S rRNA + S-adenosyl-L-homocysteine + H(+). Functionally, catalyzes the 2'-O-methylation at nucleotide C2498 in 23S rRNA. This Photobacterium profundum (strain SS9) protein is Ribosomal RNA large subunit methyltransferase M.